Reading from the N-terminus, the 302-residue chain is MASSDGDRLCRSNAVRRKTTPSYSGQYRTARRSVVVGPPDDSDDSLGYITTVGADSPSPVYADLYFEHKNTTPRVHQPNDSSGSEDDFEDIDEVVAAFREARLRHELVEDAVYENPLSVEKPSRSFTKNAAVKPKLEDSPKRAPPGAGAIASGRPISFSTAPKTATSSWCGPTPSYNKRVFCEAVRRVAAMQAQKAAEAAWNSNPPRNNAELDRLLTGAVIRITVHEGLNLIQAANEADLGEGASVSKRGHNRKTGDLQGGMGNEPMYAQVRKPKSRTDTQTTGRITNRSRARSASRTDARK.

Basic and acidic residues predominate over residues 1–10 (MASSDGDRLC). Disordered stretches follow at residues 1–42 (MASS…PDDS) and 125–167 (SFTK…TATS). Residues 154-244 (RPISFSTAPK…ANEADLGEGA (91 aa)) form an interaction with gE region. The span at 157-167 (SFSTAPKTATS) shows a compositional bias: polar residues. The Nuclear export signal signature appears at 212–224 (LDRLLTGAVIRIT). Positions 243–302 (GASVSKRGHNRKTGDLQGGMGNEPMYAQVRKPKSRTDTQTTGRITNRSRARSASRTDARK) are disordered.

Belongs to the alphaherpesvirinae VP22 tegument protein family. In terms of assembly, interacts with gE (via C-terminus); this interaction is necessary for the recruitment of VP22/ORF9 to the Golgi and its packaging into virions. Interacts with gM (via C-terminus). Interacts with VP16/ORF10; this interaction allows the formation of a tripartite complex composed of VP16/ORF10, VP22/ORF9 and VHS/ORF17. Interacts with the capsid-binding protein ORF44. Interacts with host CGAS. Highly phosphorylated in the host cell. Packaging is selective for underphosphorylated forms.

It localises to the virion tegument. The protein localises to the host cytoplasm. Its subcellular location is the host nucleus. It is found in the host Golgi apparatus. Functionally, tegument protein that plays different roles during the time course of infection. Participates in both the accumulation of viral mRNAs and viral protein translation at late time of infection. Modulates the RNase activity of the virion host shutoff protein ORF17 probably to ensure necessary levels of key cellular mRNAs and proteins. Plays a role in microtubule reorganization that occurs after viral infection by stabilizing microtubule network. Plays a role in the inhibition of host innate immune system by targeting the CGAS enzymatic activity which is the principal cytosolic DNA sensor that detects invading viral DNA. Acts by mediating disruption of liquid-like droplets in which CGAS is activated, thereby preventing CGAS activity. The protein is Tegument protein VP22 of Varicella-zoster virus (strain Oka vaccine) (HHV-3).